The sequence spans 152 residues: MLRGAHAIALDTKGRLAVPTRYRDWLREECEGQLVCTIDIANPCLLLYPLCEWEEIEKKLKSLSGMNPVERRLQRLLLGYASECELDGNGRLLLSAPLRQHAGLDKQVMLVGQLNKFEIWSETRWLQQVDEDIQALPEMDWTISDKLRDFSL.

SpoVT-AbrB domains follow at residues 5–52 and 81–124; these read AHAI…PLCE and ASEC…SETR.

Belongs to the MraZ family. In terms of assembly, forms oligomers.

It localises to the cytoplasm. The protein resides in the nucleoid. In Tolumonas auensis (strain DSM 9187 / NBRC 110442 / TA 4), this protein is Transcriptional regulator MraZ.